A 777-amino-acid chain; its full sequence is Endonuclease MutS2 (777 aa).

Position 328-335 (Gly328–Thr335) interacts with ATP. The Smr domain occupies Leu702–Lys777.

It belongs to the DNA mismatch repair MutS family. MutS2 subfamily. As to quaternary structure, homodimer. Binds to stalled ribosomes, contacting rRNA.

Endonuclease that is involved in the suppression of homologous recombination and thus may have a key role in the control of bacterial genetic diversity. In terms of biological role, acts as a ribosome collision sensor, splitting the ribosome into its 2 subunits. Detects stalled/collided 70S ribosomes which it binds and splits by an ATP-hydrolysis driven conformational change. Acts upstream of the ribosome quality control system (RQC), a ribosome-associated complex that mediates the extraction of incompletely synthesized nascent chains from stalled ribosomes and their subsequent degradation. Probably generates substrates for RQC. The chain is Endonuclease MutS2 from Streptococcus gordonii (strain Challis / ATCC 35105 / BCRC 15272 / CH1 / DL1 / V288).